Here is a 415-residue protein sequence, read N- to C-terminus: Serine hydroxymethyltransferase (415 aa).

(6S)-5,6,7,8-tetrahydrofolate-binding positions include leucine 121 and 125–127 (GHL). Position 230 is an N6-(pyridoxal phosphate)lysine (lysine 230).

This sequence belongs to the SHMT family. Homodimer. It depends on pyridoxal 5'-phosphate as a cofactor.

The protein resides in the cytoplasm. The catalysed reaction is (6R)-5,10-methylene-5,6,7,8-tetrahydrofolate + glycine + H2O = (6S)-5,6,7,8-tetrahydrofolate + L-serine. It functions in the pathway one-carbon metabolism; tetrahydrofolate interconversion. It participates in amino-acid biosynthesis; glycine biosynthesis; glycine from L-serine: step 1/1. In terms of biological role, catalyzes the reversible interconversion of serine and glycine with tetrahydrofolate (THF) serving as the one-carbon carrier. This reaction serves as the major source of one-carbon groups required for the biosynthesis of purines, thymidylate, methionine, and other important biomolecules. Also exhibits THF-independent aldolase activity toward beta-hydroxyamino acids, producing glycine and aldehydes, via a retro-aldol mechanism. The chain is Serine hydroxymethyltransferase from Syntrophomonas wolfei subsp. wolfei (strain DSM 2245B / Goettingen).